A 284-amino-acid polypeptide reads, in one-letter code: Efem/EfeO family lipoprotein (284 aa).

An N-terminal signal peptide occupies residues 1–17; that stretch reads MKKLTTLLLASTLLIAA. A lipid anchor (N-palmitoyl cysteine) is attached at C18. C18 is lipidated: S-diacylglycerol cysteine.

The protein belongs to the EfeM/EfeO family.

The protein localises to the cell membrane. This Staphylococcus aureus (strain USA300) protein is Efem/EfeO family lipoprotein.